We begin with the raw amino-acid sequence, 222 residues long: Phosphate-specific transport system accessory protein PhoU homolog 1 (222 aa).

It belongs to the PhoU family. Homodimer.

The protein localises to the cytoplasm. In terms of biological role, plays a role in the regulation of phosphate uptake. The protein is Phosphate-specific transport system accessory protein PhoU homolog 1 (phoU1) of Mycobacterium leprae (strain TN).